The following is a 131-amino-acid chain: Small ribosomal subunit protein bS6 (131 aa).

The interval 96-131 is disordered; it reads VTEASPMAKAKDERDSRRGPAGDRSYDEANAEEIAE. Residues 104–122 show a composition bias toward basic and acidic residues; that stretch reads KAKDERDSRRGPAGDRSYD.

This sequence belongs to the bacterial ribosomal protein bS6 family.

Its function is as follows. Binds together with bS18 to 16S ribosomal RNA. In Shewanella sp. (strain MR-4), this protein is Small ribosomal subunit protein bS6.